The sequence spans 202 residues: Tetranectin (202 aa).

Residues 1 to 21 (MGFWGTYLLFCLFSFLSQLTA) form the signal peptide. Intrachain disulfides connect cysteine 71/cysteine 81, cysteine 98/cysteine 197, and cysteine 173/cysteine 189. The C-type lectin domain maps to 77–198 (VNLKCLLAFT…CRDQLPYICQ (122 aa)).

In terms of assembly, homotrimer. As to expression, highest expression in lung, skeletal muscle and heart. Expressed in retina.

The protein resides in the secreted. Functionally, tetranectin binds to plasminogen and to isolated kringle 4. May be involved in the packaging of molecules destined for exocytosis. Plays a role in retinal function. This is Tetranectin (Clec3b) from Mus musculus (Mouse).